The sequence spans 36 residues: Beta/delta/mu-theraphotoxin-Pv1 (36 aa).

Disulfide bonds link Cys-3–Cys-17, Cys-10–Cys-22, and Cys-16–Cys-30. Phe-36 is subject to Phenylalanine amide.

The protein belongs to the neurotoxin 10 (Hwtx-1) family. As to expression, expressed by the venom gland.

The protein localises to the secreted. In terms of biological role, gating-modifier toxin that targets voltage-gated sodium channels. Inhibits the inactivation of Nav1.7/SCN9A. In Poecilotheria vittata (Ghost ornamental tarantula), this protein is Beta/delta/mu-theraphotoxin-Pv1.